A 121-amino-acid polypeptide reads, in one-letter code: MARTAQKLITRIKRKVRVRKKIVGTAQRPRLNVFKSARHIYAQLIDDTAGITLASCSTLSTSAESLSYTGNIAAAVHVGKEIAGLAKEKNITAVVFDRNGFLYHGRIKALADAARESGLLF.

It belongs to the universal ribosomal protein uL18 family. In terms of assembly, part of the 50S ribosomal subunit; part of the 5S rRNA/L5/L18/L25 subcomplex. Contacts the 5S and 23S rRNAs.

Its function is as follows. This is one of the proteins that bind and probably mediate the attachment of the 5S RNA into the large ribosomal subunit, where it forms part of the central protuberance. The protein is Large ribosomal subunit protein uL18 of Pelobacter propionicus (strain DSM 2379 / NBRC 103807 / OttBd1).